Reading from the N-terminus, the 657-residue chain is Probable cytochrome P450 556A1 (657 aa).

A helical membrane pass occupies residues 2 to 24; it reads FLTSILYTIIIILIFYKGLEYLI. The disordered stretch occupies residues 440–486; sequence RSLPSINNNNNNNNNNNNNNNNNNNNNNNNNSNNNSINGNNKNNNRN. Residues 446–486 show a composition bias toward low complexity; the sequence is NNNNNNNNNNNNNNNNNNNNNNNNNSNNNSINGNNKNNNRN. Residue Cys-587 coordinates heme.

The protein belongs to the cytochrome P450 family. Heme serves as cofactor.

The protein resides in the membrane. In Dictyostelium discoideum (Social amoeba), this protein is Probable cytochrome P450 556A1 (cyp556A1).